Reading from the N-terminus, the 88-residue chain is Beta-defensin 115 (88 aa).

Positions 1-27 (MLPDHFSPLSGDIKLSVLALVVLVVLA) are cleaved as a signal peptide. 3 cysteine pairs are disulfide-bonded: cysteine 38–cysteine 65, cysteine 45–cysteine 59, and cysteine 49–cysteine 66.

This sequence belongs to the beta-defensin family.

It is found in the secreted. In terms of biological role, has antibacterial activity. The protein is Beta-defensin 115 (DEFB115) of Homo sapiens (Human).